Reading from the N-terminus, the 482-residue chain is MVMEKPSPLLVGREFVRQYYTLLNKAPEYLHRFYGRNSSYVHGGVDASGKPQEAVYGQNDIHHKVLSLNFSECHTKIRHVDAHATLSDGVVVQVMGLLSNSGQPERKFMQTFVLAPEGSVPNKFYVHNDMFRYEDEVFGDSEPELDEESEDEVEEEQEERQPSPEPVQENANSGYYEAHPVTNGIEEPLEESSHEPEPEPESETKTEELKPQVEEKNLEELEEKSTTPPPAEPVSLPQEPPKAFSWASVTSKNLPPSGTVSSSGIPPHVKAPVSQPRVEAKPEVQSQPPRVREQRPRERPGFPPRGPRPGRGDMEQNDSDNRRIIRYPDSHQLFVGNLPHDIDENELKEFFMSFGNVVELRINTKGVGGKLPNFGFVVFDDSEPVQRILIAKPIMFRGEVRLNVEEKKTRAARERETRGGGDDRRDIRRNDRGPGGPRGIVGGGMMRDRDGRGPPPRGGMAQKLGSGRGTGQMEGRFTGQRR.

An NTF2 domain is found at 11–133 (VGREFVRQYY…FYVHNDMFRY (123 aa)). The span at 140–158 (DSEPELDEESEDEVEEEQE) shows a compositional bias: acidic residues. 2 disordered regions span residues 140 to 171 (DSEP…QENA) and 187 to 318 (EPLE…EQND). Ser141, Ser149, and Ser225 each carry phosphoserine. The interval 142 to 220 (EPELDEESED…PQVEEKNLEE (79 aa)) is acidic disordered region. Residues 191–225 (ESSHEPEPEPESETKTEELKPQVEEKNLEELEEKS) are compositionally biased toward basic and acidic residues. The residue at position 227 (Thr227) is a Phosphothreonine. Position 235 is a phosphoserine (Ser235). The span at 247 to 264 (ASVTSKNLPPSGTVSSSG) shows a compositional bias: polar residues. Lys281 is covalently cross-linked (Glycyl lysine isopeptide (Lys-Gly) (interchain with G-Cter in SUMO2)). The segment covering 290 to 300 (RVREQRPRERP) has biased composition (basic and acidic residues). Residues 331-409 (HQLFVGNLPH…VRLNVEEKKT (79 aa)) form the RRM domain. An N6-succinyllysine modification is found at Lys392. Residues 404 to 476 (VEEKKTRAAR…GRGTGQMEGR (73 aa)) are RG-rich region. The span at 408 to 432 (KTRAARERETRGGGDDRRDIRRNDR) shows a compositional bias: basic and acidic residues. The segment at 408–482 (KTRAARERET…MEGRFTGQRR (75 aa)) is disordered. A compositionally biased stretch (gly residues) spans 433–445 (GPGGPRGIVGGGM). An Omega-N-methylarginine modification is found at Arg457. At Ser466 the chain carries Phosphoserine. Arg468 carries the omega-N-methylarginine modification.

Forms homooligomers. Forms heterodimers with G3BP1. Interacts with NFKBIA (via N-terminus). Interacts (via NTF2 domain) with USP10; inhibiting stress granule formation. Interacts (via NTF2 domain) with CAPRIN1; promoting stress granule formation. Associates (via RG-rich region) with 40S ribosome subunits. Interacts with PABPC1. In terms of assembly, (Microbial infection) Interacts with non-structural protein 3 (via C-terminus) of Sindbis virus and Semliki forest virus; this interaction inhibits the formation of host stress granules on viral mRNAs and the nsp3-G3BP2 complexes bind viral RNAs and probably orchestrate the assembly of viral replication complexes. Post-translationally, (Microbial infection) Cleaved by foot-and-mouth disease virus leader protease; this cleavage suppresses the formation of cytoplasmic stress granules.

It localises to the cytoplasm. It is found in the stress granule. Its activity is regulated as follows. Under physiological conditions, G3BP2 adopts a compact state that is stabilized by intramolecular interactions between the RG-rich and the acidic regions that inhibit phase separation. Upon stress, polysomes disassemble and mRNAs are released in an unfolded protein-free state. Binding of unfolded mRNA to G3BP2 outcompetes the intramolecular interactions and RNA-bound G3BP2 adopts an expanded conformation in which the RG-rich region becomes exposed to engage in protein-protein and protein-RNA interactions, allowing physical cross-linking of RNA molecules to form protein-RNA condensates, leading to liquid-liquid phase separation (LLPS). Its function is as follows. Scaffold protein that plays an essential role in cytoplasmic stress granule formation which acts as a platform for antiviral signaling. Plays an essential role in stress granule formation. Stress granules are membraneless compartments that store mRNAs and proteins, such as stalled translation pre-initiation complexes, in response to stress. Promotes formation of stress granules phase-separated membraneless compartment by undergoing liquid-liquid phase separation (LLPS) upon unfolded RNA-binding: functions as a molecular switch that triggers RNA-dependent LLPS in response to a rise in intracellular free RNA concentrations. The sequence is that of Ras GTPase-activating protein-binding protein 2 from Homo sapiens (Human).